Here is an 89-residue protein sequence, read N- to C-terminus: Cell division topological specificity factor (89 aa).

The protein belongs to the MinE family.

Its function is as follows. Prevents the cell division inhibition by proteins MinC and MinD at internal division sites while permitting inhibition at polar sites. This ensures cell division at the proper site by restricting the formation of a division septum at the midpoint of the long axis of the cell. This is Cell division topological specificity factor from Brucella anthropi (strain ATCC 49188 / DSM 6882 / CCUG 24695 / JCM 21032 / LMG 3331 / NBRC 15819 / NCTC 12168 / Alc 37) (Ochrobactrum anthropi).